The primary structure comprises 140 residues: Peptidyl-prolyl cis-trans isomerase FKBP2 (140 aa).

The N-terminal stretch at 1-20 is a signal peptide; sequence MRLSWVLTVLSICLSALVTA. The PPIase FKBP-type domain occupies 47-135; sequence GDVLHMHYTG…VFEVELLKIE (89 aa).

Belongs to the FKBP-type PPIase family. FKBP2 subfamily. As to quaternary structure, interacts with ARFGEF1/BIG1 and the C-terminal of EPB41L2.

Its subcellular location is the endoplasmic reticulum membrane. The enzyme catalyses [protein]-peptidylproline (omega=180) = [protein]-peptidylproline (omega=0). Its activity is regulated as follows. Inhibited by both FK506 and rapamycin. PPIases accelerate the folding of proteins. It catalyzes the cis-trans isomerization of proline imidic peptide bonds in oligopeptides. The sequence is that of Peptidyl-prolyl cis-trans isomerase FKBP2 (FKBP2) from Bos taurus (Bovine).